The sequence spans 278 residues: Small ribosomal subunit protein uS2 (278 aa).

The interval 233–258 (IDMEAAGEAPANKGKKKSAKARLDKS) is disordered.

The protein belongs to the universal ribosomal protein uS2 family.

The chain is Small ribosomal subunit protein uS2 from Bacteroides fragilis (strain ATCC 25285 / DSM 2151 / CCUG 4856 / JCM 11019 / LMG 10263 / NCTC 9343 / Onslow / VPI 2553 / EN-2).